The sequence spans 757 residues: RNA-directed RNA polymerase catalytic subunit (757 aa).

Residues 53-82 are disordered; sequence GRWTTNTETGAPQLNPIDGPLPEDNEPSGY. The span at 55–64 shows a compositional bias: polar residues; sequence WTTNTETGAP. 2 consecutive short sequence motifs (nuclear localization signal) follow at residues 187 to 195 and 203 to 216; these read RKRRVRDNM and RTMG…NKRS. The segment at 249 to 256 is promoter-binding site; it reads RGFVYFVE. A RdRp catalytic domain is found at 286-483; sequence VRKMMTNSQD…GINMSKKKSY (198 aa).

Belongs to the influenza viruses polymerase PB1 family. Influenza RNA polymerase is composed of three subunits: PB1, PB2 and PA. Interacts (via N-terminus) with PA (via C-terminus). Interacts (via C-terminus) with PB2 (via N-terminus); this interaction is essential for transcription initiation. Interacts (via C-terminus) with human PKP2 (via N-terminus); the interaction competitively inhibits the interaction between the RNA polymerase subunits PB1 and PB2. Post-translationally, phosphorylated by host PRKCA.

It localises to the host nucleus. It is found in the host cytoplasm. It carries out the reaction RNA(n) + a ribonucleoside 5'-triphosphate = RNA(n+1) + diphosphate. In terms of biological role, RNA-dependent RNA polymerase which is responsible for replication and transcription of virus RNA segments. The transcription of viral mRNAs occurs by a unique mechanism called cap-snatching. 5' methylated caps of cellular mRNAs are cleaved after 10-13 nucleotides by PA. In turn, these short capped RNAs are used as primers by PB1 for transcription of viral mRNAs. During virus replication, PB1 initiates RNA synthesis and copy vRNA into complementary RNA (cRNA) which in turn serves as a template for the production of more vRNAs. The chain is RNA-directed RNA polymerase catalytic subunit from Influenza A virus (strain A/Russia:St.Petersburg/8/2006 H1N1).